The sequence spans 638 residues: MKFIKFNDSTIDSFLFMMLTDLAKTLTKSEAVEVEYGVQSYYNPFEKKIYMSHFWKDRAAEDMEAGLKSDVYLRSVGTRYSSLHEFANFLNDIHRHLTFKSFAKQLFMLLEDIRIEECIKRERPGTKHVFAKRKDMYRKHFSTQLTLNLERSIFTDALFCAIYFKLTAESPLETLPSMREDIDLMRPFIEQQLLRVYEADSTRQVLKIVEDLMDGLEEVLDKDMLNTYFFLPELDYAKAAEQPLFEEEKKAPKLSDDITLPKQSDGDEDIHEEEMPTWHRETEAPSKSFLQFDIEHGAKSDLGKDASREGDDGDQALGSVQGSARQTKRKDYSKLEALESQKDQPNGAGMADGKENKYAFPIYKEPQPATSEEELSYKQQAKTIESYQKRLKQMIQKTLEHKKTLPRTDLHAGRLNNKLLRYFTERNPRLFYKKQEPSSEIDAVFTLLVDCSASMFDKMDETKRGIVLFHEALKSVAVPHQIVGFWEDTNDATEKSQPNYFNTVIPFQSSLRQDSGPAIMQLEPEEDNRDGYAIRQMTKKMLHRSEAQKFLIVFSDGEPAAFGYEQNGIVDTSEAVIEARKRGIEVINVFLSNSEIEESQMKTIQDMYGKFSIFVPDVDQLPDVLYPLLKKLLHKSIG.

The first 31 residues, 1-31, serve as a signal peptide directing secretion; the sequence is MKFIKFNDSTIDSFLFMMLTDLAKTLTKSEA. Composition is skewed to basic and acidic residues over residues 247 to 256, 273 to 284, 301 to 310, and 329 to 342; these read EEKKAPKLSD, EEMPTWHRETEA, DLGKDASREG, and RKDYSKLEALESQK. Disordered regions lie at residues 247–285 and 301–354; these read EEKKAPKLSDDITLPKQSDGDEDIHEEEMPTWHRETEAP and DLGK…ADGK. One can recognise a VWFA domain in the interval 445-632; sequence FTLLVDCSAS…DVLYPLLKKL (188 aa).

This is an uncharacterized protein from Bacillus subtilis (strain 168).